We begin with the raw amino-acid sequence, 368 residues long: Isopentenyl-diphosphate delta-isomerase (368 aa).

7 to 8 contacts substrate; that stretch reads RK. FMN contacts are provided by residues T65, 66 to 68, S96, and N125; that span reads GMT. A substrate-binding site is contributed by 96–98; sequence SQR. Q160 contributes to the substrate binding site. Residue E161 coordinates Mg(2+). Residues K193, S218, T223, 275–277, and 296–297 contribute to the FMN site; these read GIR and AL.

This sequence belongs to the IPP isomerase type 2 family. Homooctamer. Dimer of tetramers. The cofactor is FMN. Requires NADPH as cofactor. Mg(2+) is required as a cofactor.

The protein resides in the cytoplasm. It catalyses the reaction isopentenyl diphosphate = dimethylallyl diphosphate. Its function is as follows. Involved in the biosynthesis of isoprenoids. Catalyzes the 1,3-allylic rearrangement of the homoallylic substrate isopentenyl (IPP) to its allylic isomer, dimethylallyl diphosphate (DMAPP). This is Isopentenyl-diphosphate delta-isomerase from Saccharolobus islandicus (strain M.16.27) (Sulfolobus islandicus).